The sequence spans 682 residues: Zinc finger protein 16 (682 aa).

Basic and acidic residues-rich tracts occupy residues M1–E10 and V113–R125. Disordered stretches follow at residues M1 to D33 and D112 to G134. A necessary for transcription activation region spans residues Y62–I210. A C2H2-type 1; degenerate zinc finger spans residues L209 to H231. The C2H2-type 2; degenerate zinc-finger motif lies at F237–H259. K253 participates in a covalent cross-link: Glycyl lysine isopeptide (Lys-Gly) (interchain with G-Cter in SUMO2). 8 C2H2-type zinc fingers span residues Y265 to H287, Y293 to H315, Y321 to H343, Y349 to H371, F377 to H399, Y405 to H427, Y433 to H455, and H461 to H483. Required for nuclear localization stretches follow at residues S268–R393 and R341–G373. The segment at S473–A503 is required for nuclear localization. K487 carries the post-translational modification N6-acetyllysine. C2H2-type zinc fingers lie at residues Y489–H511, Y517–H539, Y545–H567, H573–H595, Y601–H623, Y629–H651, and Y657–H679.

The protein belongs to the krueppel C2H2-type zinc-finger protein family. As to quaternary structure, interacts with INCA1; the interaction inhibits INCA1 activity and induces the cell cycle process.

The protein resides in the nucleus. Acts as a transcriptional activator. Promotes cell proliferation by facilitating the cell cycle phase transition from the S to G2/M phase. Involved in both the hemin- and phorbol myristate acetate (PMA)-induced erythroid and megakaryocytic differentiation, respectively. Also plays a role as an inhibitor of cell apoptosis. The polypeptide is Zinc finger protein 16 (ZNF16) (Gorilla gorilla gorilla (Western lowland gorilla)).